Here is a 1044-residue protein sequence, read N- to C-terminus: Isoleucine--tRNA ligase (1044 aa).

The short motif at 48-58 (PFATGLPHFGH) is the 'HIGH' region element. Positions 594–598 (KMSKS) match the 'KMSKS' region motif. Residue lysine 597 participates in ATP binding.

This sequence belongs to the class-I aminoacyl-tRNA synthetase family. IleS type 2 subfamily. Monomer. It depends on Zn(2+) as a cofactor.

Its subcellular location is the cytoplasm. The enzyme catalyses tRNA(Ile) + L-isoleucine + ATP = L-isoleucyl-tRNA(Ile) + AMP + diphosphate. Its function is as follows. Catalyzes the attachment of isoleucine to tRNA(Ile). As IleRS can inadvertently accommodate and process structurally similar amino acids such as valine, to avoid such errors it has two additional distinct tRNA(Ile)-dependent editing activities. One activity is designated as 'pretransfer' editing and involves the hydrolysis of activated Val-AMP. The other activity is designated 'posttransfer' editing and involves deacylation of mischarged Val-tRNA(Ile). This Borrelia turicatae (strain 91E135) protein is Isoleucine--tRNA ligase.